Reading from the N-terminus, the 93-residue chain is MSRSAKKGPFIHKGLLRKIEEMNEKDEKKVIKVWSRASTIFPQMIGHTIAVHDGRKHVPVYVTEDMVGHKLGEFALTRTYRGHDDDEKTSKRK.

This sequence belongs to the universal ribosomal protein uS19 family.

Its function is as follows. Protein S19 forms a complex with S13 that binds strongly to the 16S ribosomal RNA. The protein is Small ribosomal subunit protein uS19 of Alkaliphilus metalliredigens (strain QYMF).